The sequence spans 141 residues: Galactose-6-phosphate isomerase subunit LacA 1 (141 aa).

The protein belongs to the LacAB/RpiB family. Heteromultimeric protein consisting of LacA and LacB.

It carries out the reaction aldehydo-D-galactose 6-phosphate = keto-D-tagatose 6-phosphate. The protein operates within carbohydrate metabolism; D-galactose 6-phosphate degradation; D-tagatose 6-phosphate from D-galactose 6-phosphate: step 1/1. The polypeptide is Galactose-6-phosphate isomerase subunit LacA 1 (Streptococcus pyogenes serotype M3 (strain SSI-1)).